The following is a 340-amino-acid chain: Myb-related protein Zm1 (340 aa).

HTH myb-type domains follow at residues 11 to 63 and 64 to 118; these read KVGL…INYL and RPDL…KKKV. 2 consecutive DNA-binding regions (H-T-H motif) follow at residues 39–63 and 91–114; these read WRALPKQAGLLRCGKSCRLRWINYL and WSKIAACLPGRTDNEIKNVWNTHL. Positions 116-126 are enriched in basic residues; that stretch reads KKVAQREKKKA. Disordered stretches follow at residues 116-173 and 190-209; these read KKVA…DATD and DGAPPAAQPMPSPSSSSSLT. Residues 133 to 166 are compositionally biased toward low complexity; the sequence is AGTPATAPLSSATSSTTTHNSSGGSDSGDQCGTS.

Its subcellular location is the nucleus. In terms of biological role, transcription factor that positively regulates genes involved in anthocyanin biosynthesis such as A1. The protein is Myb-related protein Zm1 of Zea mays (Maize).